Here is a 109-residue protein sequence, read N- to C-terminus: Nucleoid-associated protein MS1507 (109 aa).

The tract at residues 1 to 21 (MFGKGGLGNLMKQAQQMQERM) is disordered.

It belongs to the YbaB/EbfC family. In terms of assembly, homodimer.

It localises to the cytoplasm. Its subcellular location is the nucleoid. Its function is as follows. Binds to DNA and alters its conformation. May be involved in regulation of gene expression, nucleoid organization and DNA protection. This is Nucleoid-associated protein MS1507 from Mannheimia succiniciproducens (strain KCTC 0769BP / MBEL55E).